We begin with the raw amino-acid sequence, 422 residues long: Lipoyl synthase, mitochondrial (422 aa).

The transit peptide at 1 to 34 directs the protein to the mitochondrion; sequence MAASSTRLRCLYASSAPAWKKSPSQSIISLSRHY. The segment covering 37-48 has biased composition (polar residues); the sequence is TSSTTPSLNPDE. Residues 37 to 70 are disordered; the sequence is TSSTTPSLNPDESSSSSSSTIPKRRKTTTFRDKL. The [4Fe-4S] cluster site is built by Cys-146, Cys-151, Cys-157, Cys-177, Cys-181, Cys-184, and Ser-383. Residues 160-372 form the Radical SAM core domain; sequence GSDKSAATAT…RQRALEMGFL (213 aa).

The protein belongs to the radical SAM superfamily. Lipoyl synthase family. [4Fe-4S] cluster is required as a cofactor.

It localises to the mitochondrion. The enzyme catalyses [[Fe-S] cluster scaffold protein carrying a second [4Fe-4S](2+) cluster] + N(6)-octanoyl-L-lysyl-[protein] + 2 oxidized [2Fe-2S]-[ferredoxin] + 2 S-adenosyl-L-methionine + 4 H(+) = [[Fe-S] cluster scaffold protein] + N(6)-[(R)-dihydrolipoyl]-L-lysyl-[protein] + 4 Fe(3+) + 2 hydrogen sulfide + 2 5'-deoxyadenosine + 2 L-methionine + 2 reduced [2Fe-2S]-[ferredoxin]. It functions in the pathway protein modification; protein lipoylation via endogenous pathway; protein N(6)-(lipoyl)lysine from octanoyl-[acyl-carrier-protein]: step 2/2. Functionally, catalyzes the radical-mediated insertion of two sulfur atoms into the C-6 and C-8 positions of the octanoyl moiety bound to the lipoyl domains of lipoate-dependent enzymes, thereby converting the octanoylated domains into lipoylated derivatives. The chain is Lipoyl synthase, mitochondrial from Talaromyces stipitatus (strain ATCC 10500 / CBS 375.48 / QM 6759 / NRRL 1006) (Penicillium stipitatum).